We begin with the raw amino-acid sequence, 175 residues long: ATP synthase subunit b (175 aa).

The chain crosses the membrane as a helical span at residues 22-44 (MLVQLFFFLILLALLKKFAWGPL).

Belongs to the ATPase B chain family. F-type ATPases have 2 components, F(1) - the catalytic core - and F(0) - the membrane proton channel. F(1) has five subunits: alpha(3), beta(3), gamma(1), delta(1), epsilon(1). F(0) has three main subunits: a(1), b(2) and c(10-14). The alpha and beta chains form an alternating ring which encloses part of the gamma chain. F(1) is attached to F(0) by a central stalk formed by the gamma and epsilon chains, while a peripheral stalk is formed by the delta and b chains.

The protein resides in the cell membrane. F(1)F(0) ATP synthase produces ATP from ADP in the presence of a proton or sodium gradient. F-type ATPases consist of two structural domains, F(1) containing the extramembraneous catalytic core and F(0) containing the membrane proton channel, linked together by a central stalk and a peripheral stalk. During catalysis, ATP synthesis in the catalytic domain of F(1) is coupled via a rotary mechanism of the central stalk subunits to proton translocation. In terms of biological role, component of the F(0) channel, it forms part of the peripheral stalk, linking F(1) to F(0). This chain is ATP synthase subunit b, found in Oceanobacillus iheyensis (strain DSM 14371 / CIP 107618 / JCM 11309 / KCTC 3954 / HTE831).